Reading from the N-terminus, the 193-residue chain is Pyridoxal 5'-phosphate synthase subunit PdxT (193 aa).

48–50 (GES) serves as a coordination point for L-glutamine. Cysteine 80 (nucleophile) is an active-site residue. L-glutamine-binding positions include arginine 112 and 140 to 141 (IR). Residues histidine 176 and glutamate 178 each act as charge relay system in the active site.

This sequence belongs to the glutaminase PdxT/SNO family. In the presence of PdxS, forms a dodecamer of heterodimers. Only shows activity in the heterodimer.

The enzyme catalyses aldehydo-D-ribose 5-phosphate + D-glyceraldehyde 3-phosphate + L-glutamine = pyridoxal 5'-phosphate + L-glutamate + phosphate + 3 H2O + H(+). It catalyses the reaction L-glutamine + H2O = L-glutamate + NH4(+). It participates in cofactor biosynthesis; pyridoxal 5'-phosphate biosynthesis. Functionally, catalyzes the hydrolysis of glutamine to glutamate and ammonia as part of the biosynthesis of pyridoxal 5'-phosphate. The resulting ammonia molecule is channeled to the active site of PdxS. The sequence is that of Pyridoxal 5'-phosphate synthase subunit PdxT from Mycolicibacterium smegmatis (strain ATCC 700084 / mc(2)155) (Mycobacterium smegmatis).